Here is a 232-residue protein sequence, read N- to C-terminus: Enolase-phosphatase E1 (232 aa).

Belongs to the HAD-like hydrolase superfamily. MasA/MtnC family. As to quaternary structure, monomer. Requires Mg(2+) as cofactor.

It carries out the reaction 5-methylsulfanyl-2,3-dioxopentyl phosphate + H2O = 1,2-dihydroxy-5-(methylsulfanyl)pent-1-en-3-one + phosphate. It functions in the pathway amino-acid biosynthesis; L-methionine biosynthesis via salvage pathway; L-methionine from S-methyl-5-thio-alpha-D-ribose 1-phosphate: step 3/6. It participates in amino-acid biosynthesis; L-methionine biosynthesis via salvage pathway; L-methionine from S-methyl-5-thio-alpha-D-ribose 1-phosphate: step 4/6. Its function is as follows. Bifunctional enzyme that catalyzes the enolization of 2,3-diketo-5-methylthiopentyl-1-phosphate (DK-MTP-1-P) into the intermediate 2-hydroxy-3-keto-5-methylthiopentenyl-1-phosphate (HK-MTPenyl-1-P), which is then dephosphorylated to form the acireductone 1,2-dihydroxy-3-keto-5-methylthiopentene (DHK-MTPene). In Xanthomonas axonopodis pv. citri (strain 306), this protein is Enolase-phosphatase E1.